Consider the following 623-residue polypeptide: Sodium-coupled monocarboxylate transporter 2 (623 aa).

The Extracellular portion of the chain corresponds to 1–10; that stretch reads METVGRFQAG. The chain crosses the membrane as a helical span at residues 11-31; it reads DYVVFACLFVVSSGIGVFFAI. Topologically, residues 32–50 are cytoplasmic; that stretch reads KERNKAPSKEFLVGGRQMS. The helical transmembrane segment at 51–71 threads the bilayer; the sequence is CGPVALSLTASFMSAVTVIGA. Residues 72–83 are Extracellular-facing; it reads PADVYRFGASYV. Residues 84–104 form a helical membrane-spanning segment; sequence IFGVAYTFVVFFTAELFLPVF. At 105–129 the chain is on the cytoplasmic side; that stretch reads YRSGITSTYEYLELRFCKLVRVAAT. The chain crosses the membrane as a helical span at residues 130–150; the sequence is LIYIIQTILYTGVVVYAPALA. Residues 151-158 lie on the Extracellular side of the membrane; the sequence is LNQVTGFD. Residues 159-179 form a helical membrane-spanning segment; it reads LWGSIFATGIVCTFYCTLGGL. Over 180-181 the chain is Cytoplasmic; it reads KA. A helical transmembrane segment spans residues 182-202; that stretch reads VVWTDAFQMVVMVVGFLTVLI. The Extracellular segment spans residues 203 to 236; it reads QGSSRAGGIENVWSTSRTGGRLQVFDFDVSPLRR. A helical transmembrane segment spans residues 237 to 257; that stretch reads HTFWTLSVGGTFTWLGIYGVN. The Cytoplasmic segment spans residues 258–276; the sequence is QSTIQRCISCKTEGHARWA. The helical transmembrane segment at 277-297 threads the bilayer; the sequence is LYLNLLGLWIILFCAVVSGLI. Residues 298-322 are Extracellular-facing; the sequence is MYSYYSHCDPWSSGLISAPDQLMPY. A helical membrane pass occupies residues 323–343; the sequence is FVMEILGAFPGLPGLFVACAF. Residues 344–386 are Cytoplasmic-facing; sequence SGTLSTVAASINALATVMYEDFVSQCFPDLSNRAASWISKALC. A helical transmembrane segment spans residues 387–407; the sequence is VAFGVACTTMAVAASYMGGIV. At 408 to 412 the chain is on the extracellular side; it reads QAALS. Residues 413–433 traverse the membrane as a helical segment; the sequence is IHGMCGGPVLGLFSLGILFPF. Topologically, residues 434 to 438 are cytoplasmic; that stretch reads TNLKG. A helical membrane pass occupies residues 439-459; that stretch reads AVGGLIVGISLSFWVGVGAFI. The Extracellular segment spans residues 460–510; the sequence is YPAPSNNTHALELNTAGCNITAAAFEPTSATVTQLTSDRNWLADSWYSMSY. 2 N-linked (GlcNAc...) asparagine glycosylation sites follow: Asn465 and Asn478. A helical transmembrane segment spans residues 511–531; the sequence is LYYSAVGFIGTVAAGLLITLL. The Cytoplasmic portion of the chain corresponds to 532–623; sequence TGPMDPKLLK…NETSIVQKKL (92 aa).

It belongs to the sodium:solute symporter (SSF) (TC 2.A.21) family.

The protein resides in the apical cell membrane. It catalyses the reaction (S)-lactate(out) + Na(+)(out) = (S)-lactate(in) + Na(+)(in). It carries out the reaction nicotinate(out) + Na(+)(out) = nicotinate(in) + Na(+)(in). The catalysed reaction is pyruvate(out) + Na(+)(out) = pyruvate(in) + Na(+)(in). The enzyme catalyses propanoate(out) + Na(+)(out) = propanoate(in) + Na(+)(in). It catalyses the reaction butanoate(out) + Na(+)(out) = butanoate(in) + Na(+)(in). It carries out the reaction acetoacetate(out) + Na(+)(out) = acetoacetate(in) + Na(+)(in). In terms of biological role, acts as an electroneutral and low-affinity sodium (Na(+))-dependent sodium-coupled solute transporter. Catalyzes the transport across the plasma membrane of many monocarboxylates such as lactate, pyruvate, nicotinate, propionate, butyrate and beta-D-hydroxybutyrate. The protein is Sodium-coupled monocarboxylate transporter 2 (slc5a12) of Danio rerio (Zebrafish).